Here is a 146-residue protein sequence, read N- to C-terminus: Large ribosomal subunit protein bL21 (146 aa).

A disordered region spans residues Asp-103–Asp-146. A compositionally biased stretch (basic and acidic residues) spans Glu-116 to Arg-131.

This sequence belongs to the bacterial ribosomal protein bL21 family. As to quaternary structure, part of the 50S ribosomal subunit. Contacts protein L20.

In terms of biological role, this protein binds to 23S rRNA in the presence of protein L20. The sequence is that of Large ribosomal subunit protein bL21 from Nitrobacter winogradskyi (strain ATCC 25391 / DSM 10237 / CIP 104748 / NCIMB 11846 / Nb-255).